The sequence spans 904 residues: E3 ubiquitin-protein ligase ZNF598 (904 aa).

Residues 29–69 form an RING-type zinc finger; it reads CVLCCGDLEATALGRCDHPVCYRCSTKMRVLCEQRYCAVCR. The C2H2-type zinc finger occupies 187–210; it reads PLCKFCDERYLDNDELLKHLRRDH. Tyrosine 306 carries the phosphotyrosine modification. Disordered stretches follow at residues 312–469 and 490–656; these read YSRQ…GLAL and VSSV…LPRP. A compositionally biased stretch (low complexity) spans 346–358; the sequence is AAAVRASVAAQQQ. Residues 359–388 show a composition bias toward basic and acidic residues; the sequence is EEARRSEDQEEGGRPKKEEAAARGPEDPRG. The segment covering 404–416 has biased composition (polar residues); that stretch reads ETSTNGPVSQEAF. The segment covering 418–431 has biased composition (low complexity); the sequence is VTGPAAPGCVGVPG. Phosphoserine occurs at positions 428, 431, and 437. Low complexity-rich tracts occupy residues 447–461 and 502–513; these read SLSASTSSSCSTAAT and SLVSAWNSSSSS. Residues 521-531 are compositionally biased toward polar residues; sequence LSAQATGSGQP. A compositionally biased stretch (basic residues) spans 534–543; sequence KAGKGSRGGR. Positions 564–584 are enriched in polar residues; that stretch reads LLSTRPTGSVSSTLGLASIQP.

The protein belongs to the ZNF598/HEL2 family. Interacts with the E2 ubiquitin-conjugating enzyme UBE2D3. Component of the 4EHP-GYF2 complex, at least composed of EIF4E2, GIGYF2 and ZNF598.

It is found in the cytoplasm. Its subcellular location is the cytosol. The enzyme catalyses S-ubiquitinyl-[E2 ubiquitin-conjugating enzyme]-L-cysteine + [acceptor protein]-L-lysine = [E2 ubiquitin-conjugating enzyme]-L-cysteine + N(6)-ubiquitinyl-[acceptor protein]-L-lysine.. It participates in protein modification; protein ubiquitination. E3 ubiquitin-protein ligase that plays a key role in the ribosome quality control (RQC), a pathway that takes place when a ribosome has stalled during translation, leading to degradation of nascent peptide chains. ZNF598 is activated when ribosomes are stalled within an mRNA following translation of prematurely polyadenylated mRNAs. Acts as a ribosome collision sensor: specifically recognizes and binds collided di-ribosome, which arises when a trailing ribosome encounters a slower leading ribosome, leading to terminally arrest translation. Following binding to colliding ribosomes, mediates monoubiquitination of 40S ribosomal proteins RPS10/eS10 and RPS3/uS3, and 'Lys-63'-linked polyubiquitination of RPS20/uS10. Polyubiquitination of RPS20/uS10 promotes recruitment of the RQT (ribosome quality control trigger) complex, which drives the disassembly of stalled ribosomes, followed by degradation of nascent peptides. E3 ubiquitin-protein ligase activity is dependent on the E2 ubiquitin-conjugating enzyme UBE2D3. Also acts as an adapter that recruits the 4EHP-GYF2 complex to mRNAs. Independently of its role in RQC, may also act as a negative regulator of interferon-stimulated gene (ISG) expression. Its function is as follows. (Microbial infection) Required for poxvirus protein synthesis by mediating ubiquitination of RPS10/eS10 and RPS20/uS10. Poxvirus encoding mRNAs contain unusual 5' poly(A) leaders and ZNF598 is required for their translational efficiency, possibly via its ability to suppress readthrough or sliding on shorter poly(A) tracts. This Homo sapiens (Human) protein is E3 ubiquitin-protein ligase ZNF598.